Here is a 142-residue protein sequence, read N- to C-terminus: Large ribosomal subunit protein uL13 (142 aa).

It belongs to the universal ribosomal protein uL13 family. Part of the 50S ribosomal subunit.

This protein is one of the early assembly proteins of the 50S ribosomal subunit, although it is not seen to bind rRNA by itself. It is important during the early stages of 50S assembly. The polypeptide is Large ribosomal subunit protein uL13 (Akkermansia muciniphila (strain ATCC BAA-835 / DSM 22959 / JCM 33894 / BCRC 81048 / CCUG 64013 / CIP 107961 / Muc)).